Consider the following 624-residue polypeptide: Polycomb group protein EMF2A (624 aa).

Residues 338 to 359 (CPFCLVRCGNFKGLECHMTSSH) form a C2H2-type zinc finger. A disordered region spans residues 420 to 445 (DAHIMESGSPEETQAESEDDVQEENE). The span at 432 to 445 (TQAESEDDVQEENE) shows a compositional bias: acidic residues. The segment at 474–609 (LSANRADPRN…SARTMDTCNR (136 aa)) is VEFS-box.

It belongs to the VEFS (VRN2-EMF2-FIS2-SU(Z)12) family. In terms of assembly, component of the polycomb repressive complex 2 (PRC2), which methylates 'Lys-27' residues of histone H3 (H3K27me3), leading to transcriptional repression of the affected target gene. As to expression, widely expressed. Highly expressed in shoot apical meristem and inflorescence meristem. Expressed in roots, leaves and immature seeds.

Polycomb group (PcG) protein. PcG proteins act by forming multiprotein complexes, which are required to maintain the transcriptionally repressive state of homeotic genes throughout development. PcG proteins are not required to initiate repression, but to maintain it during later stages of development. They act via the methylation of histones, rendering chromatin heritably changed in its expressibility. The chain is Polycomb group protein EMF2A from Oryza sativa subsp. japonica (Rice).